Reading from the N-terminus, the 386-residue chain is MSALEKSMHLGRLPSRPPLPGSGGSQSGAKMRMGPGRKRDFTPVPWSQYFESMEDVEVENETGKDTFRVYKSGSEGPVLLLLHGGGHSALSWAVFTAAIISRVQCRIVALDLRSHGETKVKNSEDLSAETMAKDVGNVVEAMYGDLPPPVMLIGHSMGGAIAVHTAAANLVPSLLGLCMIDVVEGTAMDALNSMQNFLRGRPKTFKSLENAIEWSVKSGQIRNLESARVSMVGQVKQCEGITSPESSKSIVEGIIEEEEEDEEGSESVNKRKKEDDMETKKDHPYTWRIELAKTEKYWDGWFRGLSNLFLSCPIPKLLLLAGVDRLDKDLTIGQMQGKFQMQVLPQCGHAVHEDAPDKVAEAVATFLIRHRFAEPIGGFQCVFPGC.

Positions 1 to 38 (MSALEKSMHLGRLPSRPPLPGSGGSQSGAKMRMGPGRK) are disordered. Phosphoserine is present on S15. An Asymmetric dimethylarginine; alternate modification is found at R16. R16 bears the Omega-N-methylarginine; alternate mark. S156 is a catalytic residue. A compositionally biased stretch (acidic residues) spans 255–265 (IEEEEEDEEGS). The tract at residues 255–280 (IEEEEEDEEGSESVNKRKKEDDMETK) is disordered. The segment covering 268–280 (VNKRKKEDDMETK) has biased composition (basic and acidic residues). The active site involves H349.

The protein belongs to the AB hydrolase superfamily. In terms of assembly, binds PPP2CA and PPP2CB. Post-translationally, phosphorylated by SIK1 following increases in intracellular sodium, leading to dissociation from the protein phosphatase 2A (PP2A) complex and subsequent dephosphorylation of sodium/potassium-transporting ATPase ATP1A1.

It catalyses the reaction [phosphatase 2A protein]-C-terminal L-leucine methyl ester + H2O = [phosphatase 2A protein]-C-terminal L-leucine + methanol + H(+). Its function is as follows. Demethylates proteins that have been reversibly carboxymethylated. Demethylates PPP2CB (in vitro) and PPP2CA. Binding to PPP2CA displaces the manganese ion and inactivates the enzyme. The polypeptide is Protein phosphatase methylesterase 1 (Ppme1) (Rattus norvegicus (Rat)).